A 295-amino-acid polypeptide reads, in one-letter code: 4-hydroxy-tetrahydrodipicolinate synthase (295 aa).

Residue Thr-48 coordinates pyruvate. Tyr-136 (proton donor/acceptor) is an active-site residue. Lys-164 acts as the Schiff-base intermediate with substrate in catalysis. Position 206 (Ile-206) interacts with pyruvate.

It belongs to the DapA family. In terms of assembly, homotetramer; dimer of dimers.

The protein resides in the cytoplasm. It catalyses the reaction L-aspartate 4-semialdehyde + pyruvate = (2S,4S)-4-hydroxy-2,3,4,5-tetrahydrodipicolinate + H2O + H(+). Its pathway is amino-acid biosynthesis; L-lysine biosynthesis via DAP pathway; (S)-tetrahydrodipicolinate from L-aspartate: step 3/4. Catalyzes the condensation of (S)-aspartate-beta-semialdehyde [(S)-ASA] and pyruvate to 4-hydroxy-tetrahydrodipicolinate (HTPA). This Actinobacillus pleuropneumoniae serotype 5b (strain L20) protein is 4-hydroxy-tetrahydrodipicolinate synthase.